The following is a 490-amino-acid chain: Ribosomal L1 domain-containing protein 1 (490 aa).

Met-1 carries the post-translational modification N-acetylmethionine. Residues 1–27 (MEDSASASLSSAAATGTSTSTPAAPTA) show a composition bias toward low complexity. The interval 1-33 (MEDSASASLSSAAATGTSTSTPAAPTARKQLDK) is disordered. Glycyl lysine isopeptide (Lys-Gly) (interchain with G-Cter in SUMO2) cross-links involve residues Lys-120 and Lys-254. A compositionally biased stretch (basic residues) spans 280-293 (LNKKKKEARRKRRE). A coiled-coil region spans residues 280-313 (LNKKKKEARRKRRERNFEKQKERKKKRQQARKTA). The disordered stretch occupies residues 280–490 (LNKKKKEARR…PKKPKVPQST (211 aa)). Positions 329 to 343 (TVKKPESKKEQTPEH) are enriched in basic and acidic residues. Thr-340 bears the Phosphothreonine mark. Residues 344–353 (GKKKRGRGKA) show a composition bias toward basic residues. Thr-358 is modified (phosphothreonine). The residue at position 361 (Ser-361) is a Phosphoserine. Thr-375 is modified (phosphothreonine). The span at 376–385 (PANEKVEIQK) shows a compositional bias: basic and acidic residues. A Glycyl lysine isopeptide (Lys-Gly) (interchain with G-Cter in SUMO2) cross-link involves residue Lys-380. Phosphoserine occurs at positions 392 and 396. Phosphothreonine occurs at positions 415 and 423. Ser-427 bears the Phosphoserine mark. Positions 427 to 460 (SPEKKPKIKEEAVKEKSPSLGKKDARQTPKKPEA) are enriched in basic and acidic residues. Lys-435 participates in a covalent cross-link: Glycyl lysine isopeptide (Lys-Gly) (interchain with G-Cter in SUMO2). Residue Ser-443 is modified to Phosphoserine. Lys-461 is covalently cross-linked (Glycyl lysine isopeptide (Lys-Gly) (interchain with G-Cter in SUMO2)). Thr-465 carries the post-translational modification Phosphothreonine. Lys-468 carries the post-translational modification N6-acetyllysine. Ser-469 carries the post-translational modification Phosphoserine. Residues 469–490 (SVRKASHTPKKWPKKPKVPQST) show a composition bias toward basic residues.

Belongs to the universal ribosomal protein uL1 family. Highly divergent. Interacts with ING1 (isoform 2). Interacts with KPNA7 and KPNA2. In terms of tissue distribution, expressed at high intensities in the heart, skeletal muscle, and placenta.

Its subcellular location is the nucleus. The protein localises to the nucleolus. Its function is as follows. Regulates cellular senescence through inhibition of PTEN translation. Acts as a pro-apoptotic regulator in response to DNA damage. In Homo sapiens (Human), this protein is Ribosomal L1 domain-containing protein 1 (RSL1D1).